A 282-amino-acid chain; its full sequence is Elongation factor Ts (282 aa).

The tract at residues 80 to 83 (TDFV) is involved in Mg(2+) ion dislocation from EF-Tu.

Belongs to the EF-Ts family.

It is found in the cytoplasm. In terms of biological role, associates with the EF-Tu.GDP complex and induces the exchange of GDP to GTP. It remains bound to the aminoacyl-tRNA.EF-Tu.GTP complex up to the GTP hydrolysis stage on the ribosome. The sequence is that of Elongation factor Ts from Chlamydia felis (strain Fe/C-56) (Chlamydophila felis).